The sequence spans 96 residues: Co-chaperonin GroES (96 aa).

The protein belongs to the GroES chaperonin family. As to quaternary structure, heptamer of 7 subunits arranged in a ring. Interacts with the chaperonin GroEL.

The protein resides in the cytoplasm. Its function is as follows. Together with the chaperonin GroEL, plays an essential role in assisting protein folding. The GroEL-GroES system forms a nano-cage that allows encapsulation of the non-native substrate proteins and provides a physical environment optimized to promote and accelerate protein folding. GroES binds to the apical surface of the GroEL ring, thereby capping the opening of the GroEL channel. This Thiobacillus denitrificans (strain ATCC 25259 / T1) protein is Co-chaperonin GroES.